Consider the following 364-residue polypeptide: Fructose-bisphosphate aldolase B (364 aa).

N-acetylalanine is present on Ala-2. Lys-13 carries the N6-succinyllysine modification. Ser-36 is subject to Phosphoserine. Thr-39 carries the phosphothreonine modification. Arg-43 provides a ligand contact to beta-D-fructose 1,6-bisphosphate. Ser-89 is subject to Phosphoserine. At Thr-119 the chain carries Phosphothreonine. Lys-121 is modified (N6-succinyllysine). Phosphoserine is present on Ser-132. Glu-188 acts as the Proton acceptor in catalysis. The active-site Schiff-base intermediate with dihydroxyacetone-P is Lys-230. Phosphoserine is present on residues Ser-272, Ser-276, Ser-299, and Ser-301. 272 to 274 (SGG) provides a ligand contact to beta-D-fructose 1,6-bisphosphate. Arg-304 is a binding site for beta-D-fructose 1,6-bisphosphate. Ser-309 is modified (phosphoserine). Lys-317 is subject to N6-succinyllysine.

It belongs to the class I fructose-bisphosphate aldolase family. As to quaternary structure, homotetramer. Interacts with BBS1, BBS2, BBS4 and BBS7. Forms a ternary complex with G6PD and TP53; this interaction is direct.

The protein localises to the cytoplasm. It is found in the cytosol. Its subcellular location is the cytoskeleton. The protein resides in the microtubule organizing center. It localises to the centrosome. The protein localises to the centriolar satellite. It carries out the reaction beta-D-fructose 1,6-bisphosphate = D-glyceraldehyde 3-phosphate + dihydroxyacetone phosphate. The enzyme catalyses beta-D-fructose 1-phosphate = D-glyceraldehyde + dihydroxyacetone phosphate. The protein operates within carbohydrate degradation; glycolysis; D-glyceraldehyde 3-phosphate and glycerone phosphate from D-glucose: step 4/4. Its pathway is carbohydrate biosynthesis; gluconeogenesis. It functions in the pathway carbohydrate metabolism; fructose metabolism. Catalyzes the aldol cleavage of fructose 1,6-biphosphate to form two triosephosphates dihydroxyacetone phosphate and D-glyceraldehyde 3-phosphate in glycolysis as well as the reverse stereospecific aldol addition reaction in gluconeogenesis. In fructolysis, metabolizes fructose 1-phosphate derived from the phosphorylation of dietary fructose by fructokinase into dihydroxyacetone phosphate and D-glyceraldehyde. Acts as an adapter independently of its enzymatic activity, exerts a tumor suppressor role by stabilizing the ternary complex with G6PD and TP53 to inhibit G6PD activity and keep oxidative pentose phosphate metabolism in check. This Oryctolagus cuniculus (Rabbit) protein is Fructose-bisphosphate aldolase B (ALDOB).